The chain runs to 417 residues: Putative UDP-arabinose 4-epimerase 2 (417 aa).

Residues 1–31 (MLNLGRARTGRQNRSMSFEGLDFADPKKNNN) lie on the Cytoplasmic side of the membrane. Residues 32-54 (YMGKIVLVMTLTAMCILLLNQSP) form a helical; Signal-anchor for type II membrane protein membrane-spanning segment. Topologically, residues 55–417 (TFNTPSVFSR…YGSSSLVSAY (363 aa)) are lumenal. 71 to 102 (HVLVTGGAGYIGSHAALRLLKDSYRVTIVDNL) lines the NAD(+) pocket. Tyrosine 219 functions as the Proton acceptor in the catalytic mechanism.

Belongs to the NAD(P)-dependent epimerase/dehydratase family. Requires NAD(+) as cofactor.

It is found in the golgi apparatus. Its subcellular location is the golgi stack membrane. It catalyses the reaction UDP-beta-L-arabinopyranose = UDP-alpha-D-xylose. It functions in the pathway nucleotide-sugar biosynthesis; UDP-L-arabinose biosynthesis; UDP-L-arabinose from UDP-alpha-D-xylose: step 1/1. The protein operates within cell wall biogenesis; cell wall polysaccharide biosynthesis. This is Putative UDP-arabinose 4-epimerase 2 from Arabidopsis thaliana (Mouse-ear cress).